A 139-amino-acid chain; its full sequence is Endoribonuclease YbeY (139 aa).

3 residues coordinate Zn(2+): H105, H109, and D115.

Belongs to the endoribonuclease YbeY family. Requires Zn(2+) as cofactor.

It is found in the cytoplasm. Functionally, single strand-specific metallo-endoribonuclease involved in late-stage 70S ribosome quality control and in maturation of the 3' terminus of the 16S rRNA. The chain is Endoribonuclease YbeY from Flavobacterium johnsoniae (strain ATCC 17061 / DSM 2064 / JCM 8514 / BCRC 14874 / CCUG 350202 / NBRC 14942 / NCIMB 11054 / UW101) (Cytophaga johnsonae).